The following is a 365-amino-acid chain: D-alanine--D-alanine ligase (365 aa).

An ATP-grasp domain is found at 156–360 (KKLMAAEGLP…YAQLLDNLIE (205 aa)). Residue 183–238 (KRELGLPVFVKPARGGSSIGISRVADWSEWDAALSLAREHDSKVIVEAEIVGVEVE) participates in ATP binding. Asp315, Glu327, and Asn329 together coordinate Mg(2+).

Belongs to the D-alanine--D-alanine ligase family. Mg(2+) is required as a cofactor. The cofactor is Mn(2+).

It localises to the cytoplasm. It carries out the reaction 2 D-alanine + ATP = D-alanyl-D-alanine + ADP + phosphate + H(+). Its pathway is cell wall biogenesis; peptidoglycan biosynthesis. In terms of biological role, cell wall formation. The polypeptide is D-alanine--D-alanine ligase (Corynebacterium diphtheriae (strain ATCC 700971 / NCTC 13129 / Biotype gravis)).